Here is an 83-residue protein sequence, read N- to C-terminus: MSIFSYLLPKKQNTASVAKERLQIIVARERSTRGGPDYLPQLQEELLQVVRKYVPVDQDAVNVQVDRESGCEILELNITLPEG.

The protein belongs to the MinE family.

Prevents the cell division inhibition by proteins MinC and MinD at internal division sites while permitting inhibition at polar sites. This ensures cell division at the proper site by restricting the formation of a division septum at the midpoint of the long axis of the cell. The protein is Cell division topological specificity factor of Alcanivorax borkumensis (strain ATCC 700651 / DSM 11573 / NCIMB 13689 / SK2).